The chain runs to 144 residues: Transcription antitermination protein NusB (144 aa).

This sequence belongs to the NusB family.

In terms of biological role, involved in transcription antitermination. Required for transcription of ribosomal RNA (rRNA) genes. Binds specifically to the boxA antiterminator sequence of the ribosomal RNA (rrn) operons. The chain is Transcription antitermination protein NusB from Blochmanniella pennsylvanica (strain BPEN).